The chain runs to 409 residues: 5-aminolevulinate synthase (409 aa).

Substrate contacts are provided by arginine 21, serine 137, and lysine 156. Residues serine 189, histidine 217, and threonine 245 each coordinate pyridoxal 5'-phosphate. The active site involves lysine 248. Lysine 248 carries the post-translational modification N6-(pyridoxal phosphate)lysine. Pyridoxal 5'-phosphate contacts are provided by threonine 277 and threonine 278. Threonine 365 serves as a coordination point for substrate.

This sequence belongs to the class-II pyridoxal-phosphate-dependent aminotransferase family. In terms of assembly, homodimer. Requires pyridoxal 5'-phosphate as cofactor.

The enzyme catalyses succinyl-CoA + glycine + H(+) = 5-aminolevulinate + CO2 + CoA. It participates in porphyrin-containing compound metabolism; protoporphyrin-IX biosynthesis; 5-aminolevulinate from glycine: step 1/1. This Paracoccus denitrificans (strain Pd 1222) protein is 5-aminolevulinate synthase (hemA).